We begin with the raw amino-acid sequence, 1357 residues long: DNA-directed RNA polymerase subunit beta (1357 aa).

It belongs to the RNA polymerase beta chain family. The RNAP catalytic core consists of 2 alpha, 1 beta, 1 beta' and 1 omega subunit. When a sigma factor is associated with the core the holoenzyme is formed, which can initiate transcription.

The catalysed reaction is RNA(n) + a ribonucleoside 5'-triphosphate = RNA(n+1) + diphosphate. Functionally, DNA-dependent RNA polymerase catalyzes the transcription of DNA into RNA using the four ribonucleoside triphosphates as substrates. This is DNA-directed RNA polymerase subunit beta from Pseudomonas syringae pv. tomato (strain ATCC BAA-871 / DC3000).